The following is a 721-amino-acid chain: Mitogen-activated protein kinase 6 (721 aa).

Methionine 1 is covalently cross-linked (Peptide (Met-Gly) (interchain with G-Cter in ubiquitin)). The Protein kinase domain occupies 20-316 (YMDLKPLGCG…AEEALSHPYM (297 aa)). ATP-binding positions include 26–34 (LGCGGNGLV) and lysine 49. Aspartate 152 acts as the Proton acceptor in catalysis. Position 189 is a phosphoserine; by PAK1, PAK2 and PAK3 (serine 189). The SEG motif motif lies at 189-191 (SEG). An FRIEDE motif motif is present at residues 332-337 (FHIEDE). Phosphoserine occurs at positions 386, 452, 556, 558, 665, and 684. Over residues 701–715 (AMKSSPQIPHQTYSS) the composition is skewed to polar residues. The disordered stretch occupies residues 701–721 (AMKSSPQIPHQTYSSILKHLN).

The protein belongs to the protein kinase superfamily. CMGC Ser/Thr protein kinase family. MAP kinase subfamily. In terms of assembly, heterodimer with ERK4/MAPK4. Interacts with (via FRIEDE motif) MAPKAPK5. Interacts with UBE3A; this interaction may be indirect and mediated by HERC2, possibly via HERC2 interaction with NEURL4. Mg(2+) is required as a cofactor. Post-translationally, phosphorylated at Ser-189 by PAK1, PAK2 and PAK3 resulting in catalytic activation. Phosphorylated by MAPKAPK5 at other sites. Ubiquitination at Met-1 leads to degradation by the proteasome pathway. As to expression, highest expression in the skeletal muscle, followed by the brain. Also found in heart, placenta, lung, liver, pancreas, kidney and skin fibroblasts.

The protein localises to the cytoplasm. It is found in the nucleus. It catalyses the reaction L-seryl-[protein] + ATP = O-phospho-L-seryl-[protein] + ADP + H(+). It carries out the reaction L-threonyl-[protein] + ATP = O-phospho-L-threonyl-[protein] + ADP + H(+). Activated by phosphorylation at Ser-189. Its function is as follows. Atypical MAPK protein. Phosphorylates microtubule-associated protein 2 (MAP2) and MAPKAPK5. The precise role of the complex formed with MAPKAPK5 is still unclear, but the complex follows a complex set of phosphorylation events: upon interaction with atypical MAPKAPK5, ERK3/MAPK6 is phosphorylated at Ser-189 and then mediates phosphorylation and activation of MAPKAPK5, which in turn phosphorylates ERK3/MAPK6. May promote entry in the cell cycle. The polypeptide is Mitogen-activated protein kinase 6 (MAPK6) (Homo sapiens (Human)).